Consider the following 428-residue polypeptide: Metal tolerance protein 10 (428 aa).

Over 1–140 (MPLNSYIFFL…EMKKLAKSER (140 aa)) the chain is Cytoplasmic. A helical transmembrane segment spans residues 141 to 161 (LAVHISNATNLVLFVAKVYAS). At 162–167 (MESRSM) the chain is on the vacuolar side. The chain crosses the membrane as a helical span at residues 168 to 188 (AVIASTLDSLLDLLSGFILWF). The Cytoplasmic portion of the chain corresponds to 189–209 (TANAMRKPNQFHYPIGKRRMQ). Residues 210–230 (PVGIIVFASVMATLGLQVLLE) form a helical membrane-spanning segment. Residues 231-248 (SGRQLVAKSGIHMNSTEE) are Vacuolar-facing. A helical transmembrane segment spans residues 249–269 (KWMIGIMVSVTIVKFLLMLYC). The Cytoplasmic portion of the chain corresponds to 270-287 (RGFQNEIVRAYAQDHLFD). The chain crosses the membrane as a helical span at residues 288 to 308 (VVTNSIGLATAVLAVKFYWWI). The Vacuolar portion of the chain corresponds to 309-311 (DPT). A helical transmembrane segment spans residues 312-332 (GAILIALYTIATWARTVLENV). The Cytoplasmic segment spans residues 333-428 (HSLIGRSAPP…FTHRPEHKCN (96 aa)).

The protein belongs to the cation diffusion facilitator (CDF) transporter (TC 2.A.4) family. SLC30A subfamily.

It is found in the vacuole membrane. Functionally, involved in sequestration of excess metal in the cytoplasm into vacuoles to maintain metal homeostasis. This Arabidopsis thaliana (Mouse-ear cress) protein is Metal tolerance protein 10 (MTP10).